A 759-amino-acid chain; its full sequence is Protein zyg-11 homolog A (759 aa).

LRR repeat units follow at residues 204 to 227, 235 to 260, and 490 to 513; these read LPRL…LTCK, MHYL…CLLH, and VTSI…FMAV.

The protein belongs to the zyg-11 family.

Probably acts as a target recruitment subunit in an E3 ubiquitin ligase complex ZYGA-CUL2-elongin BC. This chain is Protein zyg-11 homolog A (ZYG11A), found in Homo sapiens (Human).